A 167-amino-acid chain; its full sequence is Peptidoglycan-binding-like protein (167 aa).

A signal peptide spans 1-24 (MRSPKVKFLTIFTLSILITKMSFA).

This sequence belongs to the IagB/IpgF/P19 family.

The protein resides in the periplasm. This is Peptidoglycan-binding-like protein (pbl) from Escherichia coli O157:H7.